The primary structure comprises 332 residues: MQKNILVLGAGAWGTALALQLAYRGHNVRINSWKAEHNEQMLKDNNNHKYLPSIEKFPSRLKAIQDWQANIIEFDSILVATPSSGFKNTILELKECILPQQNIISATKGFCHDSYALLSEIAEDILPTTKFALLTGPSFAKELANQLPTAVVVASKDINYARYVQELFSNENFRCYTTTDIIGAQVGGAVKNVLAITAGIAAGMEFGVNAHAALITRGLAEIKKLGLKLGANSETFIGLSCLGDLLLTCSDNQSRNRRFGLYLGQGMTIQQALKEVNNVVEGYFTAKAVYNFAKKHNVEMPLVFATYRILYEAADPRDIVKELMTRQLKNEN.

3 residues coordinate NADPH: W13, K34, and K108. Positions 108, 136, and 138 each coordinate sn-glycerol 3-phosphate. A140 contacts NADPH. The sn-glycerol 3-phosphate site is built by K191, D244, S254, R255, and N256. The Proton acceptor role is filled by K191. R255 contacts NADPH. The NADPH site is built by V279 and E281.

The protein belongs to the NAD-dependent glycerol-3-phosphate dehydrogenase family.

The protein localises to the cytoplasm. The catalysed reaction is sn-glycerol 3-phosphate + NAD(+) = dihydroxyacetone phosphate + NADH + H(+). The enzyme catalyses sn-glycerol 3-phosphate + NADP(+) = dihydroxyacetone phosphate + NADPH + H(+). It participates in membrane lipid metabolism; glycerophospholipid metabolism. Catalyzes the reduction of the glycolytic intermediate dihydroxyacetone phosphate (DHAP) to sn-glycerol 3-phosphate (G3P), the key precursor for phospholipid synthesis. The sequence is that of Glycerol-3-phosphate dehydrogenase [NAD(P)+] from Francisella tularensis subsp. holarctica (strain FTNF002-00 / FTA).